The sequence spans 64 residues: Large ribosomal subunit protein bL35 (64 aa).

The disordered stretch occupies residues 1–27 (MPKMKTKSGAKKRFKPTASGFKHKHAF).

The protein belongs to the bacterial ribosomal protein bL35 family.

The polypeptide is Large ribosomal subunit protein bL35 (Azotobacter vinelandii (strain DJ / ATCC BAA-1303)).